The primary structure comprises 641 residues: Pumilio homolog 24 (641 aa).

The interval M1–K82 is disordered. Positions Q9–N404 constitute a PUM-HD domain. Composition is skewed to basic and acidic residues over residues R14–K27 and R67–A76. Pumilio repeat units lie at residues K118–T153, E154–S189, S190–A225, Q303–K340, and A341–R378. Positions M427–A468 are disordered. Positions D428–D440 are enriched in basic and acidic residues. The segment covering G441–T455 has biased composition (acidic residues). The segment covering V456–A468 has biased composition (basic and acidic residues).

It localises to the nucleus. The protein resides in the nucleolus. Sequence-specific RNA-binding protein that regulates translation and mRNA stability by binding the 3'-UTR of target mRNAs. This Arabidopsis thaliana (Mouse-ear cress) protein is Pumilio homolog 24 (APUM24).